The primary structure comprises 139 residues: D-ribose pyranase (139 aa).

The Proton donor role is filled by H20. Residues D28, H106, and 128–130 each bind substrate; that span reads YAN.

It belongs to the RbsD / FucU family. RbsD subfamily. In terms of assembly, homodecamer.

The protein localises to the cytoplasm. It catalyses the reaction beta-D-ribopyranose = beta-D-ribofuranose. Its pathway is carbohydrate metabolism; D-ribose degradation; D-ribose 5-phosphate from beta-D-ribopyranose: step 1/2. Its function is as follows. Catalyzes the interconversion of beta-pyran and beta-furan forms of D-ribose. The polypeptide is D-ribose pyranase (Haemophilus influenzae (strain PittGG)).